Here is a 478-residue protein sequence, read N- to C-terminus: Probable L-ascorbate peroxidase 8, chloroplastic (478 aa).

The segment covering Met1–Ala13 has biased composition (low complexity). Disordered stretches follow at residues Met1–Ala31 and Gly44–Arg66. Residues Met1–Arg76 constitute a chloroplast transit peptide. Over residues Ser14–Pro26 the composition is skewed to pro residues. His117 serves as the catalytic Proton acceptor. The interval Ala245–Gln276 is disordered. His246 is a binding site for heme b. A K(+)-binding site is contributed by Thr247. Basic and acidic residues predominate over residues Ser251–Pro270. K(+) is bound by residues Thr279 and Asp286. Residues Ala346–Glu417 form a disordered region. Residues Pro369–Pro381 are compositionally biased toward pro residues. Residues Pro394 to Ala406 are compositionally biased toward low complexity. The chain crosses the membrane as a helical span at residues Tyr458–Ser478.

It belongs to the peroxidase family. Ascorbate peroxidase subfamily. As to quaternary structure, interacts with SWEET11/OS8N3. It depends on heme b as a cofactor. In terms of tissue distribution, expressed in roots, leaves, stems and flowers. Expressed in leaves, shoots and panicles. Expressed at low levels in roots.

Its subcellular location is the plastid. The protein resides in the chloroplast thylakoid membrane. It carries out the reaction L-ascorbate + H2O2 = L-dehydroascorbate + 2 H2O. In terms of biological role, involved in defense response and tolerance to the bacterial pathogen Xanthomonas oryzae pv. oryzae (Xoo). Plays an important role in hydrogen peroxide removal during infection by Xoo. Involved in response to abiotic stress. Plays a role in hydrogen peroxide removal durings salt stress. This chain is Probable L-ascorbate peroxidase 8, chloroplastic, found in Oryza sativa subsp. japonica (Rice).